The chain runs to 1263 residues: Kinesin-like protein KIN-12E (1263 aa).

Residues proline 21–histidine 44 form a disordered region. Positions glutamate 35–histidine 44 are enriched in polar residues. Residues asparagine 93 to isoleucine 430 enclose the Kinesin motor domain. ATP is bound at residue glycine 174–threonine 181. Coiled coils occupy residues serine 679 to serine 737, alanine 764 to asparagine 805, alanine 831 to leucine 881, serine 905 to glutamate 966, threonine 1091 to glutamate 1168, and leucine 1193 to leucine 1251.

Belongs to the TRAFAC class myosin-kinesin ATPase superfamily. Kinesin family. KIN-12 subfamily.

The polypeptide is Kinesin-like protein KIN-12E (Arabidopsis thaliana (Mouse-ear cress)).